Consider the following 770-residue polypeptide: DNA topoisomerase 1 (770 aa).

The Toprim domain maps to 4 to 140; sequence FRIIIAEKAD…EIRRAKFSAL (137 aa). 2 residues coordinate Mg(2+): glutamate 10 and aspartate 109. The region spanning 156-563 is the Topo IA-type catalytic domain; that stretch reads NYSLADAADA…ESKKMLHEVL (408 aa). The tract at residues 194-199 is interaction with DNA; that stretch reads SAGRVQ. Tyrosine 312 serves as the catalytic O-(5'-phospho-DNA)-tyrosine intermediate. C4-type zinc fingers lie at residues 611–638, 673–700, and 719–744; these read CEDP…CPVC, CPAD…YPKC, and CPYC…NMQC.

Belongs to the type IA topoisomerase family. Monomer. Requires Mg(2+) as cofactor.

It carries out the reaction ATP-independent breakage of single-stranded DNA, followed by passage and rejoining.. Functionally, releases the supercoiling and torsional tension of DNA, which is introduced during the DNA replication and transcription, by transiently cleaving and rejoining one strand of the DNA duplex. Introduces a single-strand break via transesterification at a target site in duplex DNA. The scissile phosphodiester is attacked by the catalytic tyrosine of the enzyme, resulting in the formation of a DNA-(5'-phosphotyrosyl)-enzyme intermediate and the expulsion of a 3'-OH DNA strand. The free DNA strand then undergoes passage around the unbroken strand, thus removing DNA supercoils. Finally, in the religation step, the DNA 3'-OH attacks the covalent intermediate to expel the active-site tyrosine and restore the DNA phosphodiester backbone. This chain is DNA topoisomerase 1, found in Thermoplasma acidophilum (strain ATCC 25905 / DSM 1728 / JCM 9062 / NBRC 15155 / AMRC-C165).